The primary structure comprises 334 residues: Protein NlpD/LppB homolog (334 aa).

A LysM domain is found at 89–133 (IFYIVKSKDTMYSIAKNSGYNYHELSKFNSIKKPYKIIIGQKIWM).

This sequence belongs to the E.coli NlpD/Haemophilus LppB family.

The polypeptide is Protein NlpD/LppB homolog (Buchnera aphidicola subsp. Acyrthosiphon pisum (strain APS) (Acyrthosiphon pisum symbiotic bacterium)).